Here is a 794-residue protein sequence, read N- to C-terminus: Tail tubular protein gp12 (794 aa).

Interacts with head-to-tail connector protein gp8, the tail component gp11, and the fiber protein gp17.

It localises to the virion. Structural component of the short non-contractile tail. The tail complex is involved in viral genome delivery. Forms the end of the tail, including the canonical tube, the nozzle, and the small extensions below the fibers. Once the tail tubular structure is formed, the interface between gp11 and gp12 generates the proper environment to interact with the six gp17 trimers. The chain is Tail tubular protein gp12 from Escherichia coli (Bacteriophage T7).